We begin with the raw amino-acid sequence, 347 residues long: Eukaryotic translation initiation factor 3 subunit I (347 aa).

WD repeat units lie at residues 8–47 (GHERPLTQVKYNKEGDLVFSCSKDSVASVWYSINGERLGT), 50–89 (GHTGTIWSIDVDPFTESCVTGSADYSIKVWKVQTGTVIHT), 91–135 (TAPV…VTKE), 151–190 (ENHKGVTVAGWSAEGKYIIACHKDGKVSKYNAKTGEFITS), 193–232 (LHTQTIGDIQFSPDRTYFITSSRDSMAYILDVESMEQLKS), and 290–329 (GHFGPLNYVAVNPQGTSYTSGGEDGFARIHHFEKSYFDFK).

The protein belongs to the eIF-3 subunit I family. Component of the eukaryotic translation initiation factor 3 (eIF-3) complex.

The protein resides in the cytoplasm. Component of the eukaryotic translation initiation factor 3 (eIF-3) complex, which is involved in protein synthesis of a specialized repertoire of mRNAs and, together with other initiation factors, stimulates binding of mRNA and methionyl-tRNAi to the 40S ribosome. The eIF-3 complex specifically targets and initiates translation of a subset of mRNAs involved in cell proliferation. This Vanderwaltozyma polyspora (strain ATCC 22028 / DSM 70294 / BCRC 21397 / CBS 2163 / NBRC 10782 / NRRL Y-8283 / UCD 57-17) (Kluyveromyces polysporus) protein is Eukaryotic translation initiation factor 3 subunit I.